The primary structure comprises 255 residues: AA9 family lytic polysaccharide monooxygenase D (255 aa).

The first 19 residues, 1–19 (MYRTLGSIALLAGGAAAHG), serve as a signal peptide directing secretion. Cu(2+)-binding residues include H18 and H92. 2 cysteine pairs are disulfide-bonded: C65-C189 and C104-C111. N152 carries an N-linked (GlcNAc...) asparagine glycan. Residues H178 and Q184 each contribute to the O2 site. Y186 is a binding site for Cu(2+). N220 is a glycosylation site (N-linked (GlcNAc...) asparagine).

This sequence belongs to the polysaccharide monooxygenase AA9 family. Requires Cu(2+) as cofactor.

It is found in the secreted. The catalysed reaction is [(1-&gt;4)-beta-D-glucosyl]n+m + reduced acceptor + O2 = 4-dehydro-beta-D-glucosyl-[(1-&gt;4)-beta-D-glucosyl]n-1 + [(1-&gt;4)-beta-D-glucosyl]m + acceptor + H2O.. Its function is as follows. Lytic polysaccharide monooxygenase (LPMO) that depolymerizes crystalline and amorphous polysaccharides via the oxidation of scissile alpha- or beta-(1-4)-glycosidic bonds, yielding specifically C1 oxidation product. Catalysis by LPMOs requires the reduction of the active-site copper from Cu(II) to Cu(I) by a reducing agent and H(2)O(2) or O(2) as a cosubstrate. Is active on regenerated amorphous cellulose (RAC) in the presence of ascorbic acid or 3-methylcatechol. Also acts on phosphoric acid swollen cellulose (PASC) as a substrate. This is AA9 family lytic polysaccharide monooxygenase D from Thermothelomyces thermophilus (strain ATCC 42464 / BCRC 31852 / DSM 1799) (Sporotrichum thermophile).